Here is a 323-residue protein sequence, read N- to C-terminus: Fructose-1,6-bisphosphatase class 1 (323 aa).

The Mg(2+) site is built by Glu-88, Asp-107, Leu-109, and Asp-110. Substrate-binding positions include 110–113 (DGSS) and Asn-200. Glu-272 provides a ligand contact to Mg(2+).

The protein belongs to the FBPase class 1 family. In terms of assembly, homotetramer. The cofactor is Mg(2+).

The protein resides in the cytoplasm. It carries out the reaction beta-D-fructose 1,6-bisphosphate + H2O = beta-D-fructose 6-phosphate + phosphate. Its pathway is carbohydrate biosynthesis; gluconeogenesis. This is Fructose-1,6-bisphosphatase class 1 from Acinetobacter baumannii (strain ATCC 17978 / DSM 105126 / CIP 53.77 / LMG 1025 / NCDC KC755 / 5377).